The primary structure comprises 220 residues: Protein-L-isoaspartate O-methyltransferase (220 aa).

Residue S70 is part of the active site.

The protein belongs to the methyltransferase superfamily. L-isoaspartyl/D-aspartyl protein methyltransferase family.

The protein resides in the cytoplasm. The catalysed reaction is [protein]-L-isoaspartate + S-adenosyl-L-methionine = [protein]-L-isoaspartate alpha-methyl ester + S-adenosyl-L-homocysteine. Its function is as follows. Catalyzes the methyl esterification of L-isoaspartyl residues in peptides and proteins that result from spontaneous decomposition of normal L-aspartyl and L-asparaginyl residues. It plays a role in the repair and/or degradation of damaged proteins. The polypeptide is Protein-L-isoaspartate O-methyltransferase (Halorhodospira halophila (strain DSM 244 / SL1) (Ectothiorhodospira halophila (strain DSM 244 / SL1))).